Here is a 75-residue protein sequence, read N- to C-terminus: Defense protein 6 (75 aa).

A signal peptide spans 1 to 20; the sequence is MKTCLVFAFFLVAVFAAVQA. Residues 21–32 constitute a propeptide that is removed on maturation; the sequence is EENDSPQTLPRR. 3 disulfides stabilise this stretch: Cys-44-Cys-63, Cys-49-Cys-68, and Cys-53-Cys-70.

The protein belongs to the invertebrate defensin family.

It localises to the secreted. Functionally, has antibacterial activity. The polypeptide is Defense protein 6 (Lonomia obliqua (Moth)).